Here is a 271-residue protein sequence, read N- to C-terminus: 3-methyl-2-oxobutanoate hydroxymethyltransferase (271 aa).

Residues aspartate 51 and aspartate 90 each coordinate Mg(2+). 3-methyl-2-oxobutanoate contacts are provided by residues 51–52 (DS), aspartate 90, and lysine 118. Glutamate 120 is a Mg(2+) binding site. Residue glutamate 186 is the Proton acceptor of the active site.

It belongs to the PanB family. As to quaternary structure, homodecamer; pentamer of dimers. It depends on Mg(2+) as a cofactor.

Its subcellular location is the cytoplasm. The enzyme catalyses 3-methyl-2-oxobutanoate + (6R)-5,10-methylene-5,6,7,8-tetrahydrofolate + H2O = 2-dehydropantoate + (6S)-5,6,7,8-tetrahydrofolate. The protein operates within cofactor biosynthesis; (R)-pantothenate biosynthesis; (R)-pantoate from 3-methyl-2-oxobutanoate: step 1/2. In terms of biological role, catalyzes the reversible reaction in which hydroxymethyl group from 5,10-methylenetetrahydrofolate is transferred onto alpha-ketoisovalerate to form ketopantoate. In Xanthomonas campestris pv. campestris (strain 8004), this protein is 3-methyl-2-oxobutanoate hydroxymethyltransferase.